We begin with the raw amino-acid sequence, 1541 residues long: ATP-binding cassette sub-family C member 2 (1541 aa).

Over 1-26 (MDKFCNSTFWDLSLLESPEADLPLCF) the chain is Extracellular. N-linked (GlcNAc...) asparagine glycosylation occurs at Asn-6. The chain crosses the membrane as a helical span at residues 27–47 (EQTVLVWIPLGFLWLLAPWQL). At 48-67 (YSVYRSRTKRSSITKFYLAK) the chain is on the cytoplasmic side. A helical transmembrane segment spans residues 68 to 88 (QVFVVFLLILAAIDLSLALTE). Over 89–92 (DTGQ) the chain is Extracellular. Residues 93 to 113 (ATVPPVRYTNPILYLCTWLLV) form a helical membrane-spanning segment. Topologically, residues 114–125 (LAVQHSRQWCVR) are cytoplasmic. Residues 126–146 (KNSWFLSLFWILSVLCGVFQF) form a helical membrane-spanning segment. Topologically, residues 147-164 (QTLIRALLKDSKSNMAYS) are extracellular. Residues 165–185 (YLFFVSYGFQIVLLILTAFSG) form a helical membrane-spanning segment. The Cytoplasmic segment spans residues 186–309 (PSDSTQTPSV…DYPKSWLIKS (124 aa)). Residues Ser-279 and Ser-281 each carry the phosphoserine modification. The chain crosses the membrane as a helical span at residues 310–330 (LFKTFHVVILKSFILKLIHDL). In terms of domain architecture, ABC transmembrane type-1 1 spans 318 to 601 (ILKSFILKLI…LPMVTSSILQ (284 aa)). The Extracellular segment spans residues 331–356 (LVFLNPQLLKLLIGFVKSSNSYVWFG). A helical transmembrane segment spans residues 357 to 377 (YICAILMFAVTLIQSFCLQSY). At 378 to 433 (FQHCFVLGMCVRTTVMSSIYKKALTLSNLARKQYTIGETVNLMSVDSQKLMDATNY) the chain is on the cytoplasmic side. The chain crosses the membrane as a helical span at residues 434 to 454 (MQLVWSSVIQITLSIFFLWRE). Residues 455 to 457 (LGP) lie on the Extracellular side of the membrane. Residues 458–478 (SILAGVGVMVLLIPVNGVLAT) form a helical membrane-spanning segment. Over 479-540 (KIRNIQVQNM…NLLRFGQLQS (62 aa)) the chain is Cytoplasmic. A helical transmembrane segment spans residues 541 to 561 (LLIFILQITPILVSVVTFSVY). Residues 562-583 (VLVDSANVLNAEKAFTSITLFN) lie on the Extracellular side of the membrane. The helical transmembrane segment at 584–604 (ILRFPLSMLPMVTSSILQASV) threads the bilayer. Residues 605–967 (SVDRLERYLG…VKFSIYLKYL (363 aa)) lie on the Cytoplasmic side of the membrane. The region spanning 633 to 857 (VKFSEASFTW…KGVFARNWKT (225 aa)) is the ABC transporter 1 domain. Position 667–674 (667–674 (GTVGSGKS)) interacts with ATP. Disordered stretches follow at residues 862–881 (SGPE…DDDD) and 901–923 (RENS…GKSL). Ser-874 carries the phosphoserine modification. Residues 906–915 (RRTLSRSSRS) show a composition bias toward low complexity. Phosphoserine occurs at positions 922 and 926. Residues 968–988 (QAVGWWSILFIILFYGLNNVA) form a helical membrane-spanning segment. Residues 975–1260 (ILFIILFYGL…LVRMTSEAET (286 aa)) enclose the ABC transmembrane type-1 2 domain. Topologically, residues 989–1029 (FIGSNLWLSAWTSDSDNLNGTNNSSSHRDMRIGVFGALGLA) are extracellular. N-linked (GlcNAc...) asparagine glycosylation is found at Asn-1007, Asn-1010, and Asn-1011. Residues 1030–1050 (QGICLLISTLWSIYACRNASK) form a helical membrane-spanning segment. Residues 1051-1093 (ALHGQLLTNILRAPMRFFDTTPTGRIVNRFSGDISTVDDLLPQ) lie on the Cytoplasmic side of the membrane. Residues 1094-1114 (TLRSWMMCFFGIAGTLVMICM) traverse the membrane as a helical segment. Position 1115 (Ala-1115) is a topological domain, extracellular. The helical transmembrane segment at 1116-1136 (TPVFAIIIIPLSILYISVQVF) threads the bilayer. Residues 1137 to 1207 (YVATSRQLRR…TSNRWLAIRL (71 aa)) lie on the Cytoplasmic side of the membrane. Residues 1208–1228 (ELVGNLVVFCSALLLVIYRKT) form a helical membrane-spanning segment. Over 1229 to 1230 (LT) the chain is Extracellular. A helical membrane pass occupies residues 1231–1251 (GDVVGFVLSNALNITQTLNWL). Residues 1252–1541 (VRMTSEAETN…GIENVNHTEL (290 aa)) lie on the Cytoplasmic side of the membrane. The 235-residue stretch at 1296-1530 (IQFNNYQVRY…RGSFYLMAKE (235 aa)) folds into the ABC transporter 2 domain. 1330–1337 (GRTGAGKS) contributes to the ATP binding site. At Ser-1434 the chain carries Phosphoserine.

The protein belongs to the ABC transporter superfamily. ABCC family. Conjugate transporter (TC 3.A.1.208) subfamily. Mainly expressed in the liver.

The protein resides in the apical cell membrane. The enzyme catalyses an S-substituted glutathione(in) + ATP + H2O = an S-substituted glutathione(out) + ADP + phosphate + H(+). It carries out the reaction taurolithocholate 3-sulfate(in) + ATP + H2O = taurolithocholate 3-sulfate(out) + ADP + phosphate + H(+). It catalyses the reaction ATP + H2O + xenobioticSide 1 = ADP + phosphate + xenobioticSide 2.. The catalysed reaction is 17beta-estradiol 17-O-(beta-D-glucuronate)(in) + ATP + H2O = 17beta-estradiol 17-O-(beta-D-glucuronate)(out) + ADP + phosphate + H(+). The enzyme catalyses leukotriene C4(in) + ATP + H2O = leukotriene C4(out) + ADP + phosphate + H(+). It carries out the reaction (4Z,15Z)-bilirubin IXalpha C8-beta-D-glucuronoside(in) + ATP + H2O = (4Z,15Z)-bilirubin IXalpha C8-beta-D-glucuronoside(out) + ADP + phosphate + H(+). It catalyses the reaction (4Z,15Z)-bilirubin IXalpha C8,C12-beta-D-bisglucuronoside(in) + ATP + H2O = (4Z,15Z)-bilirubin IXalpha C8,C12-beta-D-bisglucuronoside(out) + ADP + phosphate + H(+). Functionally, ATP-dependent transporter of the ATP-binding cassette (ABC) family that binds and hydrolyzes ATP to enable active transport of various substrates including many drugs, toxicants and endogenous compound across cell membranes. Transports a wide variety of conjugated organic anions such as sulfate-, glucuronide- and glutathione (GSH)-conjugates of endo- and xenobiotics substrates. Mediates hepatobiliary excretion of mono- and bis-glucuronidated bilirubin molecules and therefore play an important role in bilirubin detoxification. Also mediates hepatobiliary excretion of others glucuronide conjugates such as 17beta-estradiol 17-glucosiduronic acid and leukotriene C4. Transports sulfated bile salt such as taurolithocholate sulfate. Transports various anticancer drugs, such as anthracycline, vinca alkaloid and methotrexate and HIV-drugs such as protease inhibitors. This is ATP-binding cassette sub-family C member 2 from Rattus norvegicus (Rat).